Here is an 81-residue protein sequence, read N- to C-terminus: Protein Vpu (81 aa).

Topologically, residues Met1–Ile6 are extracellular. The helical transmembrane segment at Ala7–Ile27 threads the bilayer. The Cytoplasmic portion of the chain corresponds to Glu28–Leu81. A phosphoserine; by host CK2 mark is found at Ser52 and Ser56.

Belongs to the HIV-1 VPU protein family. As to quaternary structure, homopentamer. Interacts with host CD4 and BRTC; these interactions induce proteasomal degradation of CD4. Interacts with host BST2; this interaction leads to the degradation of host BST2. Interacts with host FBXW11. Interacts with host AP1M1; this interaction plays a role in the mistrafficking and subsequent degradation of host BST2. Interacts with host RANBP2; this interaction allows Vpu to down-regulate host BLM sumoylation. Phosphorylated by host CK2. This phosphorylation is necessary for interaction with human BTRC and degradation of CD4.

It localises to the host membrane. Ion channel activity is inhibited by hexamethylene amiloride in vitro. Enhances virion budding by targeting host CD4 and Tetherin/BST2 to proteasome degradation. Degradation of CD4 prevents any unwanted premature interactions between viral Env and its host receptor CD4 in the endoplasmic reticulum. Degradation of antiretroviral protein Tetherin/BST2 is important for virion budding, as BST2 tethers new viral particles to the host cell membrane. Mechanistically, Vpu bridges either CD4 or BST2 to BTRC, a substrate recognition subunit of the Skp1/Cullin/F-box protein E3 ubiquitin ligase, induces their ubiquitination and subsequent proteasomal degradation. The alteration of the E3 ligase specificity by Vpu seems to promote the degradation of host IKBKB, leading to NF-kappa-B down-regulation and subsequent apoptosis. Acts as a viroporin that forms an oligomeric ion channel in membranes. Modulates the host DNA repair mechanisms to promote degradation of nuclear viral cDNA in cells that are already productively infected in order to suppress immune sensing and proviral hyper-integration (superinfection). Manipulates PML-NBs and modulates SUMOylation of host BLM protein thereby enhancing its DNA-end processing activity toward viral unintegrated linear DNA. Also inhibits RAD52-mediated homologous repair of viral cDNA, preventing the generation of dead-end circular forms of single copies of the long terminal repeat and permitting sustained nucleolytic attack. In Homo sapiens (Human), this protein is Protein Vpu.